The sequence spans 82 residues: Cell division topological specificity factor (82 aa).

The protein belongs to the MinE family.

Its function is as follows. Prevents the cell division inhibition by proteins MinC and MinD at internal division sites while permitting inhibition at polar sites. This ensures cell division at the proper site by restricting the formation of a division septum at the midpoint of the long axis of the cell. The polypeptide is Cell division topological specificity factor (Buchnera aphidicola subsp. Cinara cedri (strain Cc)).